Consider the following 205-residue polypeptide: Protein PYRAB00100 (205 aa).

In terms of domain architecture, AMMECR1 spans E7–R201.

The chain is Protein PYRAB00100 from Pyrococcus abyssi (strain GE5 / Orsay).